The following is a 107-amino-acid chain: Large ribosomal subunit protein P2-A (107 aa).

The interval 85–107 (GAAAPAAAAEEEEDDDMGFGLFD) is disordered.

Belongs to the eukaryotic ribosomal protein P1/P2 family. As to quaternary structure, P1 and P2 exist as dimers at the large ribosomal subunit. Phosphorylated.

Its function is as follows. Plays an important role in the elongation step of protein synthesis. This chain is Large ribosomal subunit protein P2-A, found in Trypanosoma cruzi.